Consider the following 326-residue polypeptide: Phosphate acyltransferase (326 aa).

Belongs to the PlsX family. In terms of assembly, homodimer. Probably interacts with PlsY.

It is found in the cytoplasm. It catalyses the reaction a fatty acyl-[ACP] + phosphate = an acyl phosphate + holo-[ACP]. The protein operates within lipid metabolism; phospholipid metabolism. Its function is as follows. Catalyzes the reversible formation of acyl-phosphate (acyl-PO(4)) from acyl-[acyl-carrier-protein] (acyl-ACP). This enzyme utilizes acyl-ACP as fatty acyl donor, but not acyl-CoA. This chain is Phosphate acyltransferase, found in Thermus thermophilus (strain ATCC BAA-163 / DSM 7039 / HB27).